An 85-amino-acid polypeptide reads, in one-letter code: Beta-toxin BmKAS (85 aa).

The N-terminal stretch at 1–19 is a signal peptide; the sequence is MKTVIFLIVSSLLLIGVKT. An LCN-type CS-alpha/beta domain is found at 20-82; it reads DNGYLLDKYT…LWNYNTNKCN (63 aa). 4 cysteine pairs are disulfide-bonded: C31/C81, C35/C56, C42/C63, and C46/C65.

As to expression, expressed by the venom gland.

The protein localises to the secreted. In terms of biological role, beta toxins bind voltage-independently at site-4 of sodium channels (Nav) and shift the voltage of activation toward more negative potentials thereby affecting sodium channel activation and promoting spontaneous and repetitive firing. It binds to distinct receptor sites of mammal and insect voltage-gated sodium channels. It displays antinociceptive effect in rat models, which is due to its specific modulation of sodium channels of sensory neurons. It also significantly stimulates the binding of [3H]-ryanodine to ryanodine receptors on the sarcoplasmic reticulum of the skeletal muscle through an indirect mechanism. And it promotes noradrenaline release from the rat hippocampus slice. The polypeptide is Beta-toxin BmKAS (Olivierus martensii (Manchurian scorpion)).